The sequence spans 110 residues: Glutaredoxin-2 (110 aa).

Residues 6-106 (KAFVEKAISN…KMIAELKENK (101 aa)) form the Glutaredoxin domain. An intrachain disulfide couples Cys-26 to Cys-29.

It belongs to the glutaredoxin family.

Its function is as follows. The disulfide bond functions as an electron carrier in the glutathione-dependent synthesis of deoxyribonucleotides by the enzyme ribonucleotide reductase. In addition, it is also involved in reducing some disulfides in a coupled system with glutathione reductase. Thioltransferase catalyzes cellular thiol-disulfide transhydrogenation reactions. It transfers reducing equivalents to cytosolic protein and nonprotein disulfides. This chain is Glutaredoxin-2 (grx2), found in Schizosaccharomyces pombe (strain 972 / ATCC 24843) (Fission yeast).